A 350-amino-acid polypeptide reads, in one-letter code: Very-long-chain 3-oxoacyl-CoA reductase (350 aa).

Residues 28 to 48 form a helical membrane-spanning segment; the sequence is SLVLLAGIGALSVGTFALRLV. NADP(+) contacts are provided by valine 79, aspartate 134, asparagine 161, lysine 196, tyrosine 228, lysine 232, valine 261, and serine 263. Tyrosine 228 serves as the catalytic Proton donor. Lysine 232 acts as the Lowers pKa of active site Tyr in catalysis.

Belongs to the short-chain dehydrogenases/reductases (SDR) family.

The protein localises to the endoplasmic reticulum membrane. It carries out the reaction a very-long-chain (3R)-3-hydroxyacyl-CoA + NADP(+) = a very-long-chain 3-oxoacyl-CoA + NADPH + H(+). It functions in the pathway lipid metabolism; fatty acid biosynthesis. Component of the microsomal membrane bound fatty acid elongation system, which produces the 26-carbon very long-chain fatty acids (VLCFA) from palmitate. Catalyzes the reduction of the 3-ketoacyl-CoA intermediate that is formed in each cycle of fatty acid elongation. VLCFAs serve as precursors for ceramide and sphingolipids. The sequence is that of Very-long-chain 3-oxoacyl-CoA reductase from Mycosarcoma maydis (Corn smut fungus).